A 556-amino-acid chain; its full sequence is Secreted lipase 4 (556 aa).

The first 21 residues, 1 to 21 (MKLLTNIGTLLALSPVQQVSA), serve as a signal peptide directing secretion. Asn-46, Asn-263, Asn-305, Asn-411, and Asn-453 each carry an N-linked (GlcNAc...) asparagine glycan.

This sequence belongs to the type-B carboxylesterase/lipase family.

The protein resides in the secreted. It carries out the reaction a carboxylic ester + H2O = an alcohol + a carboxylate + H(+). Its function is as follows. Secreted lipase involved in plant virulence. Has a substrate preference for p-nitrophenyl esters with a carbon chain length of C12 (p-nitrophenyl laureate). In Gibberella zeae (strain ATCC MYA-4620 / CBS 123657 / FGSC 9075 / NRRL 31084 / PH-1) (Wheat head blight fungus), this protein is Secreted lipase 4.